The primary structure comprises 283 residues: Type III pantothenate kinase (283 aa).

An ATP-binding site is contributed by 9–16 (DIGNTRLK). Substrate is bound by residues Tyr-116 and 123 to 126 (GVDR). Residue Asp-125 is the Proton acceptor of the active site. Thr-149 contributes to the ATP binding site. Thr-211 provides a ligand contact to substrate.

Belongs to the type III pantothenate kinase family. In terms of assembly, homodimer. It depends on NH4(+) as a cofactor. K(+) serves as cofactor.

It is found in the cytoplasm. The catalysed reaction is (R)-pantothenate + ATP = (R)-4'-phosphopantothenate + ADP + H(+). It functions in the pathway cofactor biosynthesis; coenzyme A biosynthesis; CoA from (R)-pantothenate: step 1/5. In terms of biological role, catalyzes the phosphorylation of pantothenate (Pan), the first step in CoA biosynthesis. This Cupriavidus taiwanensis (strain DSM 17343 / BCRC 17206 / CCUG 44338 / CIP 107171 / LMG 19424 / R1) (Ralstonia taiwanensis (strain LMG 19424)) protein is Type III pantothenate kinase.